A 215-amino-acid polypeptide reads, in one-letter code: 3-isopropylmalate dehydratase small subunit (215 aa).

It belongs to the LeuD family. LeuD type 1 subfamily. As to quaternary structure, heterodimer of LeuC and LeuD.

The enzyme catalyses (2R,3S)-3-isopropylmalate = (2S)-2-isopropylmalate. It participates in amino-acid biosynthesis; L-leucine biosynthesis; L-leucine from 3-methyl-2-oxobutanoate: step 2/4. Functionally, catalyzes the isomerization between 2-isopropylmalate and 3-isopropylmalate, via the formation of 2-isopropylmaleate. This Xylella fastidiosa (strain M23) protein is 3-isopropylmalate dehydratase small subunit.